The following is a 156-amino-acid chain: Arginine repressor (156 aa).

The protein belongs to the ArgR family.

It localises to the cytoplasm. The protein operates within amino-acid biosynthesis; L-arginine biosynthesis [regulation]. In terms of biological role, regulates arginine biosynthesis genes. The chain is Arginine repressor from Shewanella halifaxensis (strain HAW-EB4).